The primary structure comprises 259 residues: Indole-diterpene biosynthesis cluster protein S (259 aa).

The next 5 helical transmembrane spans lie at 5–25, 64–84, 87–107, 134–154, and 221–241; these read EASG…GMVW, WFAL…AIIL, VYLI…LWVL, VLWF…AASF, and LGAG…PAAG.

It belongs to the ltmS family.

The protein localises to the membrane. Its function is as follows. Part of the gene cluster that mediates the biosynthesis of paspalitrems, indole-diterpene (IDT) mycotoxins that are potent tremorgens in mammals. The geranylgeranyl diphosphate (GGPP) synthase idtG is proposed to catalyze the first step in IDT biosynthesis via catalysis of a series of iterative condensations of isopentenyl diphosphate (IPP) with dimethylallyl diphosphate (DMAPP), geranyl diphosphate (GPP), and farnesyl diphosphate (FPP), to form GGPP. Condensation of indole-3-glycerol phosphate with GGPP by the prenyltransferase idtC then forms 3-geranylgeranylindole (3-GGI). Epoxidation of the two terminal alkenes of the geranylgeranyl moiety by the FAD-dependent monooxygenase idtM, and cyclization by the terpene cyclase idtB then leads to the production of paspaline. The cytochrome P450 monooxygenase idtP then catalyzes oxidative elimination of the pendant methyl group at C-12 of paspaline and generates the C-10 ketone to yield 13-desoxypaxilline. The cytochrome P450 monooxygenase idtQ may catalyze the C-13 oxidation of 13-desoxypaxilline to afford paxilline. Considering that both paspalicine and paxilline were detected in C.paspali, idtQ also catalyzes the formation of paspalinine from 13-desoxypaxilline via paspalicine as an intermediate. Finally, the alpha-prenyltransferase idtF prenylates paspalinine at the C-20 or the C-21 positions to yield paspalitrems A and C, respectively. The hydroxylation of paspalitrem A at C-32 by a still unknown oxidase affords paspalitrem B. This is Indole-diterpene biosynthesis cluster protein S from Claviceps paspali (Rye ergot fungus).